The primary structure comprises 95 residues: MSVTRDDVRHVAQLARLDFSEEEEARMAEELSEILGYVEKLDELDTAGVPPMSHVLDVTNVFRSDEIEERIDRGQALEPAPDADNEHFLVPQVVE.

Residues 74-95 (GQALEPAPDADNEHFLVPQVVE) are disordered.

This sequence belongs to the GatC family. In terms of assembly, heterotrimer of A, B and C subunits.

The catalysed reaction is L-glutamyl-tRNA(Gln) + L-glutamine + ATP + H2O = L-glutaminyl-tRNA(Gln) + L-glutamate + ADP + phosphate + H(+). The enzyme catalyses L-aspartyl-tRNA(Asn) + L-glutamine + ATP + H2O = L-asparaginyl-tRNA(Asn) + L-glutamate + ADP + phosphate + 2 H(+). Allows the formation of correctly charged Asn-tRNA(Asn) or Gln-tRNA(Gln) through the transamidation of misacylated Asp-tRNA(Asn) or Glu-tRNA(Gln) in organisms which lack either or both of asparaginyl-tRNA or glutaminyl-tRNA synthetases. The reaction takes place in the presence of glutamine and ATP through an activated phospho-Asp-tRNA(Asn) or phospho-Glu-tRNA(Gln). This chain is Aspartyl/glutamyl-tRNA(Asn/Gln) amidotransferase subunit C, found in Salinibacter ruber (strain DSM 13855 / M31).